Reading from the N-terminus, the 1062-residue chain is Inversin (1062 aa).

16 ANK repeats span residues 13 to 42 (SLAS…ALRD), 47 to 76 (FGRT…DVNK), 80 to 110 (SRRT…WMQK), 113 to 144 (EEMT…EVDT), 148 to 177 (NKQT…NIGI), 181 to 213 (EGKI…TESL), 220 to 250 (EGRT…NITS), 254 to 283 (LFRT…SGTI), 288 to 317 (QGAT…VKDD), 321 to 350 (EGRT…DIDI), 356 to 385 (YGGT…QVDA), 389 to 418 (MKHT…RVDL), 422 to 451 (DGHS…NPNV), 455 to 484 (AGRT…DPNI), 488 to 517 (EGRT…FPNQ), and 523 to 553 (ERYT…SIAA). A 3-hydroxyasparagine modification is found at N75. The short motif at 490 to 498 (RTALHWSCN) is the D-box 1 element. The IQ 1 domain maps to 555-584 (QDIAAFKIQAVYKGYKVRKAFRDRKNLLMK). Residues 589–608 (RKDAAAKKREEENKRKEAEQ) show a composition bias toward basic and acidic residues. The interval 589-849 (RKDAAAKKRE…QDKLIGGVSS (261 aa)) is disordered. Composition is skewed to polar residues over residues 636–658 (QNEG…TVQS) and 676–689 (QGDS…TASR). Positions 690 to 700 (KPSETPIEHCR) are enriched in basic and acidic residues. The span at 713 to 724 (GGNSSKNQGTSS) shows a compositional bias: polar residues. Composition is skewed to basic and acidic residues over residues 725–741 (VEKR…RCEE) and 775–788 (DHPR…DRAA). The short motif at 907–915 (RKELFRRKN) is the D-box 2 element. The region spanning 914-943 (KNKAAAVIQRAWRSYQLRKHLSRLLHLKQL) is the IQ 2 domain. Positions 1042–1062 (RSKKFSYNLQPSSQSKNKPKL) are disordered. Positions 1046-1062 (FSYNLQPSSQSKNKPKL) are enriched in polar residues.

As to quaternary structure, interacts with microtubules. Interacts with NPHP1. Interacts with DVL1, PRICKLE (PRICKLE1 or PRICKLE2) and Strabismus (VANGL1 or VANGL2). Binds calmodulin via its IQ domains. Interacts with APC2. Interacts with alpha-, beta-, and gamma-catenin. Interacts with N-cadherin (CDH2). Interacts with NPHP3. Interacts with IQCB1; the interaction likely requires additional interactors. Component of a complex containing at least ANKS6, INVS, NEK8 and NPHP3. ANKS6 may organize complex assembly by linking INVS and NPHP3 to NEK8 and INVS may target the complex to the proximal ciliary axoneme. May be ubiquitinated via its interaction with APC2. In terms of processing, hydroxylated at Asn-75, most probably by HIF1AN. As to expression, strongly expressed in the primary cilia of renal cells, especially in the varicosities, swellings observed in the cilia. Localizes in the node monocilia and in other 9+0 monocilia, including those of kidney epithelial cells and the pituitary gland, but it does not localize to 9+2 cilia (at protein level). In adult, it is expressed at high level in liver and kidney. Weakly or not expressed in other tissues.

The protein resides in the cytoplasm. The protein localises to the cytoskeleton. Its subcellular location is the membrane. It is found in the nucleus. It localises to the perinuclear region. The protein resides in the spindle. Required for normal renal development and establishment of left-right axis. Probably acts as a molecular switch between different Wnt signaling pathways. Inhibits the canonical Wnt pathway by targeting cytoplasmic disheveled (DVL1) for degradation by the ubiquitin-proteasome. This suggests that it is required in renal development to oppose the repression of terminal differentiation of tubular epithelial cells by Wnt signaling. Involved in the organization of apical junctions in kidney cells together with NPHP1, NPHP4 and RPGRIP1L/NPHP8. Does not seem to be strictly required for ciliogenesis. This chain is Inversin (Invs), found in Mus musculus (Mouse).